Consider the following 550-residue polypeptide: Cytochrome P450 monooxygenase hasH (550 aa).

Residues 39 to 59 (IGVLASIVVLVTVVIGPKAVI) traverse the membrane as a helical segment. Heme is bound at residue Cys493.

This sequence belongs to the cytochrome P450 family. The cofactor is heme.

Its subcellular location is the membrane. Its pathway is secondary metabolite biosynthesis. Functionally, cytochrome P450 monooxygenase; part of the gene cluster that mediates the biosynthesis of hexadehydro-astechrome (HAS), a tryptophan-derived iron(III)-complex that acts as a virulence factor in infected mice. Within the pathway, hasH, with the O-methyltransferase hasC and the FAD-linked oxidoreductase hasG, convert the hasE-prenylated Trp-Ala dipeptide into an O-methylated diketopiperazine that is then released from the hasD NRPS. The HAS biosynthesis begins with the synthesis of a tethered Trp-Ala dipeptide by the NRPS hasD. The 7-dimethylallyltryptophan synthase hasE then catalyzes the prenylation of the hasD-tethered tryptophan or the resulting tethered Trp-Ala dipeptide at the C-7 position of the indole moiety. HAS biosynthesis continues via tethered intermediates with the succesive action of the cytochrome P450 monooxygenase hasH, the O-methyltransferase hasC, and the FAD-linked oxidoreductase hasG. The resulting O-methylated diketopiperazine is then released from hasD. Finally, three O-methylated diketopiperazine molecules assemble in a trimeric complex with Fe(III) to produce hexadehydro-astechrome. The sequence is that of Cytochrome P450 monooxygenase hasH from Aspergillus fumigatus (strain CBS 144.89 / FGSC A1163 / CEA10) (Neosartorya fumigata).